The primary structure comprises 1434 residues: DNA-directed RNA polymerase subunit beta' (1434 aa).

Zn(2+)-binding residues include C70, C72, C85, and C88. Mg(2+) is bound by residues D460, D462, and D464. Zn(2+) contacts are provided by C840, C915, C922, and C925.

Belongs to the RNA polymerase beta' chain family. The RNAP catalytic core consists of 2 alpha, 1 beta, 1 beta' and 1 omega subunit. When a sigma factor is associated with the core the holoenzyme is formed, which can initiate transcription. Requires Mg(2+) as cofactor. Zn(2+) serves as cofactor.

It catalyses the reaction RNA(n) + a ribonucleoside 5'-triphosphate = RNA(n+1) + diphosphate. In terms of biological role, DNA-dependent RNA polymerase catalyzes the transcription of DNA into RNA using the four ribonucleoside triphosphates as substrates. The chain is DNA-directed RNA polymerase subunit beta' from Aeromonas hydrophila subsp. hydrophila (strain ATCC 7966 / DSM 30187 / BCRC 13018 / CCUG 14551 / JCM 1027 / KCTC 2358 / NCIMB 9240 / NCTC 8049).